The sequence spans 217 residues: Adenylate kinase (217 aa).

11–16 (GAGKGT) contacts ATP. The NMP stretch occupies residues 31–60 (STGDMFREAMANETPVGLEAKSYIDKGDLV). Residues threonine 32, arginine 37, 58 to 60 (DLV), 86 to 89 (GFPR), and glutamine 93 each bind AMP. The interval 127-165 (ARYICKNCGATYNKISNPTKVEGTCDRCGGHEFFQREDD) is LID. Position 128 (arginine 128) interacts with ATP. Zn(2+) contacts are provided by cysteine 131 and cysteine 134. 137-138 (TY) contacts ATP. Residues cysteine 151 and cysteine 154 each contribute to the Zn(2+) site. Arginine 162 and arginine 173 together coordinate AMP. Residue glutamine 201 coordinates ATP.

It belongs to the adenylate kinase family. As to quaternary structure, monomer.

The protein resides in the cytoplasm. The enzyme catalyses AMP + ATP = 2 ADP. Its pathway is purine metabolism; AMP biosynthesis via salvage pathway; AMP from ADP: step 1/1. Its function is as follows. Catalyzes the reversible transfer of the terminal phosphate group between ATP and AMP. Plays an important role in cellular energy homeostasis and in adenine nucleotide metabolism. The chain is Adenylate kinase from Lactobacillus gasseri (strain ATCC 33323 / DSM 20243 / BCRC 14619 / CIP 102991 / JCM 1131 / KCTC 3163 / NCIMB 11718 / NCTC 13722 / AM63).